We begin with the raw amino-acid sequence, 156 residues long: MAVDPLSSKALKVKRELSENTPHLSDEALMGLSVRELNRNLRGLSAEEVTRLKQRRRTLKNRGYAASCRVKRVCQKEELQKQKSELEREVDKLARENAAMRLELDALRGKCEALQGFARSVAAARGPAALVAPASVITIVKSAPGPAPAADPAPCS.

The tract at residues R51–K76 is basic motif. Residues R51 to L114 enclose the bZIP domain. The leucine-zipper stretch occupies residues L79–L93.

The protein belongs to the bZIP family. Maf subfamily. Monomer and homo- or heterodimer. Interacts with MIP. Forms high affinity heterodimers with members of the CNC-bZIP family such as NFE2L1/NRF1. Highly expressed in the lung, lower expression in the brain, thymus, liver, spleen, intestine, kidney, heart, muscle, and ovary. Not significantly expressed in hematopoietic cells.

The protein resides in the nucleus. Its function is as follows. Since they lack a putative transactivation domain, the small Mafs behave as transcriptional repressors when they dimerize among themselves. However, they seem to serve as transcriptional activators by dimerizing with other (usually larger) basic-zipper proteins, such as NFE2L1/NRF1, and recruiting them to specific DNA-binding sites. Interacts with the upstream promoter region of the oxytocin receptor gene. May be a transcriptional enhancer in the up-regulation of the oxytocin receptor gene at parturition. This is Transcription factor MafF (Maff) from Mus musculus (Mouse).